Reading from the N-terminus, the 313-residue chain is L-lactate dehydrogenase 1 (313 aa).

NAD(+)-binding positions include Val-15, Asp-36, Lys-41, Tyr-66, and 80 to 81; that span reads GA. Gln-83 and Arg-89 together coordinate substrate. Residues Ser-102, 119–121, and Ser-144 contribute to the NAD(+) site; that span reads VSN. Residue 121 to 124 participates in substrate binding; sequence NPVD. Residue 149–152 participates in substrate binding; that stretch reads DTSR. Positions 154 and 169 each coordinate beta-D-fructose 1,6-bisphosphate. The active-site Proton acceptor is His-176. Tyr-222 is subject to Phosphotyrosine. A substrate-binding site is contributed by Thr-231.

Belongs to the LDH/MDH superfamily. LDH family. In terms of assembly, homotetramer.

The protein localises to the cytoplasm. The enzyme catalyses (S)-lactate + NAD(+) = pyruvate + NADH + H(+). It functions in the pathway fermentation; pyruvate fermentation to lactate; (S)-lactate from pyruvate: step 1/1. With respect to regulation, allosterically activated by fructose 1,6-bisphosphate (FBP). Catalyzes the conversion of lactate to pyruvate. This is L-lactate dehydrogenase 1 from Clostridium acetobutylicum (strain ATCC 824 / DSM 792 / JCM 1419 / IAM 19013 / LMG 5710 / NBRC 13948 / NRRL B-527 / VKM B-1787 / 2291 / W).